Here is a 346-residue protein sequence, read N- to C-terminus: MASGVGAACEELPPDGTCDECEPDEAPGAEEVCRDCGFCYCRRHADAHRQKFLSHRLAAYVHGAQAWTPPASGGDDALPEDAEAKGEAEGEVESEVGEEESETEVDSESEEESETEEDSEDESDEESEEDSEEEMEDEQESEAEEDNQEEGESEAEGETEAESEFDPEIEMEAERVAKRKCPDHGLDLSTYCQEDRQLICVLCPVIGAHRGHQLSTLDEAFEELRSKDSGGLKAAMIELVERLKFKSSDPKVTRDQMKIFIQQEFKKVQKVIADEEQKALHLVDIQEAMATAHVTEILADIQSHMDRLMTQMAQAKEQLDTSNESAEPKAEGDEEGPSGASEEEDT.

Positions 68 to 167 (TPPASGGDDA…ETEAESEFDP (100 aa)) are disordered. Residues 89–167 (EGEVESEVGE…ETEAESEFDP (79 aa)) are compositionally biased toward acidic residues. Residues 176-217 (VAKRKCPDHGLDLSTYCQEDRQLICVLCPVIGAHRGHQLSTL) form a B box-type zinc finger. Residues cysteine 181, histidine 184, cysteine 203, and histidine 209 each coordinate Zn(2+). Positions 292 to 327 (AHVTEILADIQSHMDRLMTQMAQAKEQLDTSNESAE) form a coiled coil. Residues 313-346 (AQAKEQLDTSNESAEPKAEGDEEGPSGASEEEDT) are disordered. Residues 332 to 346 (GDEEGPSGASEEEDT) show a composition bias toward acidic residues. 2 positions are modified to phosphoserine: serine 338 and serine 341.

In terms of assembly, interacts (via coiled coil) with TRIM17 (via coiled coil). Expressed mainly in brain with high level in cerebral hemispheres and cerebellum. Lower expression in kidney, lung and spleen. In brain is detected in the hippocampus, thalamic and pretectal nuclei, substantia nigra, the dorsal part of the medulla, the cerebellum, in the olfactory nucleus, other cortical areas apart from hippocampus and the striatum. Indeed expression is confined in neuronal somata namely in the CA3 region and dentate gyrus of the hippocampus, caudate-putamen, parabranchial nucleus, olfactory nucleus, cortex, deep cerebellar nuclei and thalamus. Also highly expressed in the spleen. thymus and testis.

Functionally, may play a role in the process of differentiation and maturation of neuronal cells. May regulate the activity of TRIM17. Is a negative regulator of PAX6 expression. The protein is Tripartite motif-containing protein 44 (Trim44) of Mus musculus (Mouse).